The sequence spans 727 residues: Beta-galactosidase 2 (727 aa).

Positions methionine 1 to alanine 27 are cleaved as a signal peptide. Glutamate 185 functions as the Proton donor in the catalytic mechanism. Glutamate 254 functions as the Nucleophile in the catalytic mechanism. Asparagine 255 carries an N-linked (GlcNAc...) asparagine glycan.

This sequence belongs to the glycosyl hydrolase 35 family. Ubiquitous, with higher expression levels in roots and siliques.

The protein localises to the secreted. It localises to the extracellular space. It is found in the apoplast. It carries out the reaction Hydrolysis of terminal non-reducing beta-D-galactose residues in beta-D-galactosides.. This chain is Beta-galactosidase 2 (BGAL2), found in Arabidopsis thaliana (Mouse-ear cress).